Consider the following 851-residue polypeptide: Putative serine/threonine-protein kinase 019R (851 aa).

5 disordered regions span residues 1-24 (MATN…RTIK), 61-91 (PRVA…RGGP), 104-160 (GGAS…KRGG), 190-216 (GLSP…ARRS), and 340-400 (SRPS…GEPR). Over residues 125–141 (ARRQSPAEAAEASPCPE) the composition is skewed to low complexity. Basic residues predominate over residues 196–216 (SHMRKSPARRSPARRSPARRS). The span at 340 to 366 (SRPSGVSRTSGTSGSSGSSASSRPPNS) shows a compositional bias: low complexity. Residues 456–851 (AVSDNVIGQG…GEREIESFTM (396 aa)) form the Protein kinase domain. ATP-binding positions include 462-470 (IGQGSWGSV) and Lys-485. Asp-608 (proton acceptor) is an active-site residue.

Belongs to the protein kinase superfamily. Ser/Thr protein kinase family.

It catalyses the reaction L-seryl-[protein] + ATP = O-phospho-L-seryl-[protein] + ADP + H(+). The catalysed reaction is L-threonyl-[protein] + ATP = O-phospho-L-threonyl-[protein] + ADP + H(+). This is Putative serine/threonine-protein kinase 019R from Dryophytes versicolor (chameleon treefrog).